Here is a 466-residue protein sequence, read N- to C-terminus: UDP-glycosyltransferase 79 (466 aa).

Histidine 27 functions as the Proton acceptor in the catalytic mechanism. Histidine 27 is a UDP-alpha-D-glucose binding site. Aspartate 120 acts as the Charge relay in catalysis. Residues serine 142, threonine 291, phenylalanine 343, cysteine 344, histidine 361, tryptophan 364, asparagine 365, serine 366, glutamate 369, aspartate 385, and glutamine 386 each contribute to the UDP-alpha-D-glucose site. Residues threonine 291, phenylalanine 343, cysteine 344, and histidine 361 each coordinate UDP. Positions 365, 366, and 369 each coordinate UDP.

It belongs to the UDP-glycosyltransferase family.

Its function is as follows. Involved in the detoxification of the Fusarium mycotoxin deoxynivalenol by the transfer of glucose from UDP-D-glucose to the hydroxyl group at C-3, forming deoxynivalenol-3-O-beta-D-glucoside. The polypeptide is UDP-glycosyltransferase 79 (Oryza sativa subsp. japonica (Rice)).